The sequence spans 296 residues: Telomere repeat-binding factor 4 (296 aa).

Residues 1-62 form the HTH myb-type domain; it reads MGNQKLKWTA…WRNLSVAPGI (62 aa). The segment at residues 28 to 58 is a DNA-binding region (H-T-H motif); that stretch reads WKNILRDPELAEQLSSRSNIDLKDKWRNLSV. Positions 126–200 constitute an H15 domain; it reads NAPRYDGMIF…STQNFYKMND (75 aa). Residues 197–232 are disordered; the sequence is KMNDNSLVQRTPHVARPKESNTKSRQQTNSQGPSIS. Residues 219–232 show a composition bias toward polar residues; sequence KSRQQTNSQGPSIS. A coiled-coil region spans residues 245–282; sequence KLVEVENKLDVSKGAAEEIERLMKLAEEADEMLVIARE.

The protein belongs to the histone H1/H5 family. SMH subfamily.

The protein resides in the nucleus. It is found in the chromosome. Functionally, binds preferentially double-stranded telomeric repeats. The protein is Telomere repeat-binding factor 4 of Arabidopsis thaliana (Mouse-ear cress).